Reading from the N-terminus, the 88-residue chain is Large ribosomal subunit protein bL27 (88 aa).

The interval M1 to K24 is disordered.

Belongs to the bacterial ribosomal protein bL27 family.

This is Large ribosomal subunit protein bL27 from Synechococcus sp. (strain CC9605).